Here is a 101-residue protein sequence, read N- to C-terminus: UPF0235 protein MMP1055 (101 aa).

It belongs to the UPF0235 family.

The chain is UPF0235 protein MMP1055 from Methanococcus maripaludis (strain DSM 14266 / JCM 13030 / NBRC 101832 / S2 / LL).